A 700-amino-acid polypeptide reads, in one-letter code: Elongation factor G (700 aa).

Residues 10 to 285 (DRTRNIGIMA…AVIDYLPSPL (276 aa)) form the tr-type G domain. GTP contacts are provided by residues 19 to 26 (AHIDAGKT), 83 to 87 (DTPGH), and 137 to 140 (NKMD).

This sequence belongs to the TRAFAC class translation factor GTPase superfamily. Classic translation factor GTPase family. EF-G/EF-2 subfamily.

The protein resides in the cytoplasm. Its function is as follows. Catalyzes the GTP-dependent ribosomal translocation step during translation elongation. During this step, the ribosome changes from the pre-translocational (PRE) to the post-translocational (POST) state as the newly formed A-site-bound peptidyl-tRNA and P-site-bound deacylated tRNA move to the P and E sites, respectively. Catalyzes the coordinated movement of the two tRNA molecules, the mRNA and conformational changes in the ribosome. The protein is Elongation factor G of Lacticaseibacillus casei (strain BL23) (Lactobacillus casei).